Here is a 761-residue protein sequence, read N- to C-terminus: MKKETQNLQCIPLVISVLSLFGVSSARKPPYLCNRVCGGISIPFPFGIGGKECYLNPWYEVVCNTTTSVPFLSRINRELVNIYLPDPTEYYSNGVVHIKGPVTSSGCSTGTSQPLTPQPLNVAGQGSPYFLTDKNLLMAVGCNVKAVMMDVKSQIIGCESSCDERNSSSQVVRNKICSGNKCCQTRIPEGQPQVIGVNIEIPENKNTTEGGCKVAFLTSNKYSSLNVTEPEEFHSDGYAVVELGWYFDTSDSRVLSPIGCMNVSDASQDGGYGSETICVCSYGYFSGFSYRSCYCNSMGYAGNPFLPGGCVDIDECKLEIGRKRCKDQSCVNKPGWFTCEPKKPGQIKPVFQGVLIGSALLLFAFGIFGLYKFIKKQRRSSRMRVFFRRNGGMLLKQQLARKEGNVEMSKIFSSNELEKATDNFNTNRVLGQGGQGTVYKGMLVDGRIVAVKRSKAMDEDKVEEFINEVVVLAQINHRNIVKLLGCCLETEVPVLVYEFVPNGDLCKRLRDECDDYIMTWEVRLHIAIEIAGALSYLHSAASFPIYHRDIKTTNILLDEKYQVKVSDFGTSRSVTIDQTHLTTQVAGTFGYVDPEYFQSSKFTDKSDVYSFGVVLVELITGKNPSSRVQSEENRGFAAHFVAAVKENRFLDIVDERIKDECNLDQVMAVAKLAKRCLNRKGKKRPNMREVSVELERIRSSSYKSEIHNDDDDDDDDDDEDDQAMELNIEETWDVGMTAPASMFNNGSPASDVEPLVPLRTW.

Residues 1-26 form the signal peptide; the sequence is MKKETQNLQCIPLVISVLSLFGVSSA. The Extracellular segment spans residues 27–349; it reads RKPPYLCNRV…EPKKPGQIKP (323 aa). 5 N-linked (GlcNAc...) asparagine glycosylation sites follow: Asn64, Asn166, Asn206, Asn226, and Asn262. The tract at residues 278 to 339 is atypical EGF-like; that stretch reads CVCSYGYFSG…CVNKPGWFTC (62 aa). Cystine bridges form between Cys280-Cys293, Cys316-Cys330, and Cys325-Cys339. The chain crosses the membrane as a helical span at residues 350-370; it reads VFQGVLIGSALLLFAFGIFGL. The Cytoplasmic portion of the chain corresponds to 371 to 761; sequence YKFIKKQRRS…VEPLVPLRTW (391 aa). Positions 424 to 697 constitute a Protein kinase domain; it reads FNTNRVLGQG…REVSVELERI (274 aa). ATP-binding positions include 430 to 438 and Lys452; that span reads LGQGGQGTV. Tyr497 bears the Phosphotyrosine mark. Asp549 functions as the Proton acceptor in the catalytic mechanism. Phosphothreonine occurs at positions 583 and 588. Tyr596 is subject to Phosphotyrosine. Residues 701–761 form a disordered region; sequence SYKSEIHNDD…VEPLVPLRTW (61 aa). Positions 708 to 732 are enriched in acidic residues; that stretch reads NDDDDDDDDDDEDDQAMELNIEETW.

The protein belongs to the protein kinase superfamily. Ser/Thr protein kinase family. As to expression, expressed in the whole plant. Detected in root-shoot junctions and lateral root initiation sites.

It is found in the membrane. The enzyme catalyses L-seryl-[protein] + ATP = O-phospho-L-seryl-[protein] + ADP + H(+). It catalyses the reaction L-threonyl-[protein] + ATP = O-phospho-L-threonyl-[protein] + ADP + H(+). Its function is as follows. Serine/threonine-protein kinase that may function as a signaling receptor of extracellular matrix component. Plays a role in plant mineral nutrients response. The chain is Wall-associated receptor kinase-like 4 (WAKL4) from Arabidopsis thaliana (Mouse-ear cress).